Reading from the N-terminus, the 439-residue chain is Glucose-1-phosphate adenylyltransferase (439 aa).

Alpha-D-glucose 1-phosphate is bound by residues Tyr116, Gly182, 197-198, and Ser215; that span reads EK.

It belongs to the bacterial/plant glucose-1-phosphate adenylyltransferase family. Homotetramer.

It catalyses the reaction alpha-D-glucose 1-phosphate + ATP + H(+) = ADP-alpha-D-glucose + diphosphate. It participates in glycan biosynthesis; glycogen biosynthesis. Its function is as follows. Involved in the biosynthesis of ADP-glucose, a building block required for the elongation reactions to produce glycogen. Catalyzes the reaction between ATP and alpha-D-glucose 1-phosphate (G1P) to produce pyrophosphate and ADP-Glc. In Pasteurella multocida (strain Pm70), this protein is Glucose-1-phosphate adenylyltransferase.